A 127-amino-acid polypeptide reads, in one-letter code: Cyclin-dependent kinase 2-associated protein 2 (127 aa).

Residues 1–49 are disordered; that stretch reads MSYKPIAPAPSSTPGSSTPGPGTPVPTAGSVPSPSGSVPGAAGPFRPLF. A compositionally biased stretch (low complexity) spans 9–44; that stretch reads APSSTPGSSTPGPGTPVPTAGSVPSPSGSVPGAAGP. The interval 65-107 is interaction with CDK2; the sequence is PPGAQGSQSTYTDLLSVIEEMGKEIRPTYAGSKSAMERLKRGI.

Belongs to the CDK2AP family. As to quaternary structure, component of the nucleosome remodeling and deacetylase (NuRD) repressor complex, composed of core proteins MTA1, MTA2, MTA3, RBBP4, RBBP7, HDAC1, HDAC2, MBD2, MBD3, and peripherally associated proteins CDK2AP1, CDK2AP2, GATAD2A, GATAD2B, CHD3, CHD4 and CHD5. The exact stoichiometry of the NuRD complex is unknown, and some subunits such as MBD2 and MBD3, GATAD2A and GATAD2B, and CHD3, CHD4 and CHD5 define mutually exclusive NuRD complexes. Interacts with CDK2AP1. Interacts with CDK2. Interacts with MAPK1. Post-translationally, phosphorylated by MAPK1 and CDK2.

The protein localises to the cytoplasm. The protein resides in the nucleus. In terms of biological role, acts as a component of the histone deacetylase NuRD complex which participates in the remodeling of chromatin. Inhibits cell cycle G1/S phase transition by repressing CDK2 expression and activation; represses CDK2 activation by inhibiting its interaction with cyclin E and A. Plays a role in regulating the self-renewal of embryonic stem cells (ESCs) and in maintaining cell survival during terminal differentiation of ESCs. Regulates microtubule organization of metaphase II oocytes. In Bos taurus (Bovine), this protein is Cyclin-dependent kinase 2-associated protein 2 (CDK2AP2).